Here is a 177-residue protein sequence, read N- to C-terminus: Adenine phosphoribosyltransferase (177 aa).

It belongs to the purine/pyrimidine phosphoribosyltransferase family. Homodimer.

The protein localises to the cytoplasm. The catalysed reaction is AMP + diphosphate = 5-phospho-alpha-D-ribose 1-diphosphate + adenine. It participates in purine metabolism; AMP biosynthesis via salvage pathway; AMP from adenine: step 1/1. In terms of biological role, catalyzes a salvage reaction resulting in the formation of AMP, that is energically less costly than de novo synthesis. This is Adenine phosphoribosyltransferase from Leptospira borgpetersenii serovar Hardjo-bovis (strain JB197).